A 261-amino-acid chain; its full sequence is Enolase-phosphatase E1 (261 aa).

Positions 16 and 18 each coordinate Mg(2+). Substrate contacts are provided by residues 153 to 154 and K187; that span reads SS. Position 212 (D212) interacts with Mg(2+).

This sequence belongs to the HAD-like hydrolase superfamily. MasA/MtnC family. In terms of assembly, monomer. It depends on Mg(2+) as a cofactor.

Its subcellular location is the cytoplasm. The protein resides in the nucleus. It catalyses the reaction 5-methylsulfanyl-2,3-dioxopentyl phosphate + H2O = 1,2-dihydroxy-5-(methylsulfanyl)pent-1-en-3-one + phosphate. It participates in amino-acid biosynthesis; L-methionine biosynthesis via salvage pathway; L-methionine from S-methyl-5-thio-alpha-D-ribose 1-phosphate: step 3/6. The protein operates within amino-acid biosynthesis; L-methionine biosynthesis via salvage pathway; L-methionine from S-methyl-5-thio-alpha-D-ribose 1-phosphate: step 4/6. In terms of biological role, bifunctional enzyme that catalyzes the enolization of 2,3-diketo-5-methylthiopentyl-1-phosphate (DK-MTP-1-P) into the intermediate 2-hydroxy-3-keto-5-methylthiopentenyl-1-phosphate (HK-MTPenyl-1-P), which is then dephosphorylated to form the acireductone 1,2-dihydroxy-3-keto-5-methylthiopentene (DHK-MTPene). The protein is Enolase-phosphatase E1 (enoph1) of Danio rerio (Zebrafish).